Reading from the N-terminus, the 390-residue chain is Fluoride export protein 1 (390 aa).

The interval 1–22 is disordered; sequence MVAPLVSESQSSSIEETDEQQQ. Residues 1–72 lie on the Cytoplasmic side of the membrane; it reads MVAPLVSESQ…RFLDKTQKYY (72 aa). A helical transmembrane segment spans residues 73 to 93; the sequence is PVILNIVHGAIWGVLVRKGLM. At 94 to 100 the chain is on the extracellular side; it reads SLTTYSG. A helical membrane pass occupies residues 101–121; the sequence is SFLSGVIWANFAACVVMGLAI. Residues 122–143 lie on the Cytoplasmic side of the membrane; the sequence is DGEVFWIRLLEEKDYPNKGAIP. Residues 144–164 traverse the membrane as a helical segment; it reads VYTGLTTGFCGTVSSFSSVIL. At 165–185 the chain is on the extracellular side; the sequence is EAFNKAADTDIGVRHHYPNGA. The chain crosses the membrane as a helical span at residues 186-206; that stretch reads YGIMQFLAVILAQFGLSIMGF. Residues 207 to 229 are Cytoplasmic-facing; that stretch reads HMGKQFSAVVDNYLPLVTKRIYK. The helical transmembrane segment at 230-250 threads the bilayer; sequence VLELTSMILGVVLVVITCILI. The Extracellular portion of the chain corresponds to 251-256; the sequence is GVKKQG. Residues 257–279 form a helical membrane-spanning segment; the sequence is SWRSWTFSMLFAPFGALLRYYLS. The Cytoplasmic segment spans residues 280–290; it reads KFLNNKVSNFP. Residues 291 to 311 traverse the membrane as a helical segment; that stretch reads LGTFTANFLGTLLLAVFTLLA. Topologically, residues 312 to 338 are extracellular; sequence RGKLPGGKGHIVTNTIALHVLEGLDDG. The chain crosses the membrane as a helical span at residues 339-359; sequence FCGGLTTVSTFVVELFGLKTL. Residues 360–368 lie on the Cytoplasmic side of the membrane; it reads FSYRYGTIS. The chain crosses the membrane as a helical span at residues 369 to 389; it reads ILVCFAGVVLILGSYNWSVGL. A topological domain (extracellular) is located at residue D390.

The protein belongs to the fluoride channel Fluc/FEX (TC 1.A.43) family.

It localises to the cell membrane. The catalysed reaction is fluoride(in) = fluoride(out). In terms of biological role, fluoride channel required for the rapid expulsion of cytoplasmic fluoride. The polypeptide is Fluoride export protein 1 (Candida albicans (strain SC5314 / ATCC MYA-2876) (Yeast)).